We begin with the raw amino-acid sequence, 217 residues long: Small ribosomal subunit protein uS3 (217 aa).

The region spanning 38–106 (IRKFIDNELK…KVHINVIEIK (69 aa)) is the KH type-2 domain.

It belongs to the universal ribosomal protein uS3 family. In terms of assembly, part of the 30S ribosomal subunit. Forms a tight complex with proteins S10 and S14.

Functionally, binds the lower part of the 30S subunit head. Binds mRNA in the 70S ribosome, positioning it for translation. This Staphylococcus epidermidis (strain ATCC 35984 / DSM 28319 / BCRC 17069 / CCUG 31568 / BM 3577 / RP62A) protein is Small ribosomal subunit protein uS3.